We begin with the raw amino-acid sequence, 489 residues long: NADH-quinone oxidoreductase subunit N (489 aa).

14 helical membrane passes run 8–28 (LIAM…MLSI), 35–55 (FTIA…LYYV), 75–95 (FFTA…YPWL), 105–125 (FYML…AHHL), 127–147 (SMFI…GYAF), 159–179 (YMLL…LLYA), 203–223 (VLAG…LFPF), 235–255 (PAPT…AVVM), 271–291 (MILG…ALTQ), 303–323 (VSHL…PILA), 329–349 (IYLA…AVAS), 374–394 (AVVM…LGFI), 407–427 (SLWW…FYYL), and 456–476 (LITL…QPLI).

The protein belongs to the complex I subunit 2 family. NDH-1 is composed of 13 different subunits. Subunits NuoA, H, J, K, L, M, N constitute the membrane sector of the complex.

The protein resides in the cell inner membrane. The enzyme catalyses a quinone + NADH + 5 H(+)(in) = a quinol + NAD(+) + 4 H(+)(out). Its function is as follows. NDH-1 shuttles electrons from NADH, via FMN and iron-sulfur (Fe-S) centers, to quinones in the respiratory chain. The immediate electron acceptor for the enzyme in this species is believed to be ubiquinone. Couples the redox reaction to proton translocation (for every two electrons transferred, four hydrogen ions are translocated across the cytoplasmic membrane), and thus conserves the redox energy in a proton gradient. This is NADH-quinone oxidoreductase subunit N from Proteus mirabilis (strain HI4320).